The primary structure comprises 567 residues: MKTLSQAQSKTSSQQFSFTGNSSANVIIGNQKLTINDVARVARNGTLVSLTNNTDILQGIQASCDYINNAVESGEPIYGVTSGFGGMANVAISREQASELQTNLVWFLKTGAGNKLPLADVRAAMLLRANSHMRGASGIRLELIKRMEIFLNAGVTPYVYEFGSIGASGDLVPLSYITGSLIGLDPSFKVDFNGKEMDAPTALRQLNLSPLTLLPKEGLAMMNGTSVMTGIAANCVYDTQILTAIAMGVHALDIQALNGTNQSFHPFIHNSKPHPGQLWAADQMISLLANSQLVRDELDGKHDYRDHELIQDRYSLRCLPQYLGPIVDGISQIAKQIEIEINSVTDNPLIDVDNQASYHGGNFLGQYVGMGMDHLRYYIGLLAKHLDVQIALLASPEFSNGLPPSLLGNRERKVNMGLKGLQICGNSIMPLLTFYGNSIADRFPTHAEQFNQNINSQGYTSATLARRSVDIFQNYVAIALMFGVQAVDLRTYKKTGHYDARACLSPATERLYSAVRHVVGQKPTSDRPYIWNDNEQGLDEHIARISADIAAGGVIVQAVQDILPCLH.

The active-site Proton donor/acceptor is the Tyr-78. The 5-imidazolinone (Ala-Gly) cross-link spans 167 to 169; sequence ASG. Position 168 is a 2,3-didehydroalanine (Ser) (Ser-168). (E)-cinnamate contacts are provided by Asn-223, Gln-311, Arg-317, Asn-347, Lys-419, Glu-448, and Asn-451.

The protein belongs to the PAL/histidase family. Homotetramer. Contains an active site 4-methylidene-imidazol-5-one (MIO), which is formed autocatalytically by cyclization and dehydration of residues Ala-Ser-Gly.

Its subcellular location is the cytoplasm. It carries out the reaction L-phenylalanine = (E)-cinnamate + NH4(+). Its pathway is phenylpropanoid metabolism; trans-cinnamate biosynthesis; trans-cinnamate from L-phenylalanine: step 1/1. Catalyzes the non-oxidative deamination of L-phenylalanine to form trans-cinnamic acid, the first step in the phenylpropanoid pathway. The protein is Phenylalanine ammonia-lyase of Trichormus variabilis (strain ATCC 29413 / PCC 7937) (Anabaena variabilis).